The following is a 209-amino-acid chain: Inducible T-cell costimulator (209 aa).

Residues 1-19 (MKSDLRYFFLFCIQVEILA) form the signal peptide. The Extracellular portion of the chain corresponds to 20–141 (GEFNDSAASE…YESELCCQLK (122 aa)). A glycan (N-linked (GlcNAc...) asparagine) is linked at N23. Residues 30–133 (MFIFHNGGVQ…LSREYLNIYE (104 aa)) enclose the Ig-like V-type domain. 2 disulfide bridges follow: C42/C109 and C63/C83. N-linked (GlcNAc...) asparagine glycosylation occurs at N89. A helical transmembrane segment spans residues 142-162 (FWLPIGCAAFVTVCVFGCVLM).

As to quaternary structure, homodimer; disulfide-linked. Interacts with ICOSLG. Interacts with PIK3R1. Interacts with TBK1; this interaction is critical for the maturation of T follicular regulatory cells. In terms of processing, N-glycosylated.

It is found in the cell membrane. In terms of biological role, stimulatory receptor expressed in activated or antigen-experienced T-cells that plays an important role in the immune response. Upon binding to its ligand ICOSL expressed on antigen presenting cells (APCs), delivers costimulatory signals that enhances all basic T-cell responses to a foreign antigen, namely proliferation, secretion of lymphokines including IL10, up-regulation of molecules that mediate cell-cell interaction, and effective help for antibody secretion by B-cells. Also acts as a costimulatory receptor critical for the differentiation of T follicular regulatory cells upon immune challenges such as viral infection. Mechanistically, potentiates TCR-induced calcium flux by augmenting PLCG1 activation and actin remodeling. In addition, activates PI3K signaling pathways independently of calcium flux. Essential both for efficient interaction between T and B-cells and for normal antibody responses to T-cell dependent antigens. Prevents the apoptosis of pre-activated T-cells. Plays a critical role in CD40-mediated class switching of immunoglobin isotypes. The protein is Inducible T-cell costimulator (ICOS) of Bos taurus (Bovine).